The sequence spans 107 residues: Iron-sulfur cluster assembly protein CyaY (107 aa).

The protein belongs to the frataxin family.

Functionally, involved in iron-sulfur (Fe-S) cluster assembly. May act as a regulator of Fe-S biogenesis. This chain is Iron-sulfur cluster assembly protein CyaY, found in Enterobacter sp. (strain 638).